The following is a 540-amino-acid chain: Chaperonin GroEL 2 (540 aa).

ATP-binding positions include 29–32 (TLGP), 86–90 (DGTTT), glycine 413, 476–478 (NAA), and aspartate 492.

Belongs to the chaperonin (HSP60) family. In terms of assembly, forms a cylinder of 14 subunits composed of two heptameric rings stacked back-to-back. Interacts with the co-chaperonin GroES.

The protein resides in the cytoplasm. It catalyses the reaction ATP + H2O + a folded polypeptide = ADP + phosphate + an unfolded polypeptide.. In terms of biological role, together with its co-chaperonin GroES, plays an essential role in assisting protein folding. The GroEL-GroES system forms a nano-cage that allows encapsulation of the non-native substrate proteins and provides a physical environment optimized to promote and accelerate protein folding. The chain is Chaperonin GroEL 2 from Streptomyces albus G.